Consider the following 511-residue polypeptide: MSNPNYTSANGTSLSQYEVWFLTGSQHLYGEDVLKQVAAQSQEIADALNGSSDVPVKVVWKPVLTDSDAIRRTALEANADDSVIGVTAWMHTFSPAKMWIQGLDLLRKPLLHLHTQANVELPWADIDFDFMNLNQAAHGDREFGYIQSRLGIPRKTVVGHVSNPEVTRQVGVWQRASAGWAAVRTLKLTRFGDNMRNVAVTEGDKTEAELRFGVSVNTWSVNELADAVHGAAESDVDALVAEYERLYEVVPELKAGGARHESLRYSARIELGLRSFLEANGSAAFTTSFEDLGELRQLPGMAVQRLMADGYGFGAEGDWKTAILVRAAKVMGSGLPGGASLMEDYTYHLAPGQEKILGAHMLEVCPSLTATKPRVEIHPLGIGGKEDPVRMVFDTDAGPGVVVALSDMRDRFRLVANAVDVVDLDEPLPNLPVARALWSPKPDFATSAAAWLTAGAAHHTVLSTQVGMDVFEDFAEIAKTELLTIDEGTTIRQFKKELNWNAAYYRLAGGL.

Mn(2+) contacts are provided by Glu-316, Glu-343, His-360, and His-459.

Belongs to the arabinose isomerase family. Requires Mn(2+) as cofactor.

The enzyme catalyses beta-L-arabinopyranose = L-ribulose. The protein operates within carbohydrate degradation; L-arabinose degradation via L-ribulose; D-xylulose 5-phosphate from L-arabinose (bacterial route): step 1/3. In terms of biological role, catalyzes the conversion of L-arabinose to L-ribulose. This is L-arabinose isomerase from Arthrobacter sp. (strain FB24).